The following is a 234-amino-acid chain: Large ribosomal subunit protein uL1 (234 aa).

Belongs to the universal ribosomal protein uL1 family. In terms of assembly, part of the 50S ribosomal subunit.

Its function is as follows. Binds directly to 23S rRNA. The L1 stalk is quite mobile in the ribosome, and is involved in E site tRNA release. Functionally, protein L1 is also a translational repressor protein, it controls the translation of the L11 operon by binding to its mRNA. This is Large ribosomal subunit protein uL1 from Pectobacterium atrosepticum (strain SCRI 1043 / ATCC BAA-672) (Erwinia carotovora subsp. atroseptica).